Here is a 408-residue protein sequence, read N- to C-terminus: uncharacterized protein (408 aa).

Residues 49-77 (PRSSPEVQRKATAGENSEVGSPESSLSTS) form a disordered region. Over residues 62-77 (GENSEVGSPESSLSTS) the composition is skewed to polar residues. One can recognise an F-box domain in the interval 124-170 (SFEFMQLPDTDICQIMSFLDAQSLLNLSQTCSHLRQLCLAHEDNAGK).

This is an uncharacterized protein from Caenorhabditis elegans.